Here is a 430-residue protein sequence, read N- to C-terminus: Glucose-1-phosphate adenylyltransferase (430 aa).

Alpha-D-glucose 1-phosphate-binding positions include G163, 178–179, and S210; that span reads EK.

It belongs to the bacterial/plant glucose-1-phosphate adenylyltransferase family. Homotetramer.

It catalyses the reaction alpha-D-glucose 1-phosphate + ATP + H(+) = ADP-alpha-D-glucose + diphosphate. It participates in glycan biosynthesis; glycogen biosynthesis. Involved in the biosynthesis of ADP-glucose, a building block required for the elongation reactions to produce glycogen. Catalyzes the reaction between ATP and alpha-D-glucose 1-phosphate (G1P) to produce pyrophosphate and ADP-Glc. The protein is Glucose-1-phosphate adenylyltransferase of Synechococcus elongatus (strain ATCC 33912 / PCC 7942 / FACHB-805) (Anacystis nidulans R2).